We begin with the raw amino-acid sequence, 65 residues long: U15-hexatoxin-Mg1a (65 aa).

Contains 4 disulfide bonds. Expressed by the venom gland.

The protein resides in the secreted. Its function is as follows. Intrathorax injection into crickets causes paralysis prolonged for more than 60 minutes, followed by recovery. The sequence is that of U15-hexatoxin-Mg1a from Macrothele gigas (Japanese funnel web spider).